A 440-amino-acid chain; its full sequence is L-gulonolactone oxidase (440 aa).

Residues 17-187 (YGCCPEMYFQ…LTVTLQCVPQ (171 aa)) form the FAD-binding PCMH-type domain. His54 carries the pros-8alpha-FAD histidine modification. A helical membrane pass occupies residues 253 to 273 (FYLLEFLLWISTFLPGLVGWI).

The protein belongs to the oxygen-dependent FAD-linked oxidoreductase family. The cofactor is FAD.

The protein resides in the microsome membrane. The protein localises to the endoplasmic reticulum membrane. It carries out the reaction L-gulono-1,4-lactone + O2 = L-ascorbate + H2O2 + H(+). It functions in the pathway cofactor biosynthesis; L-ascorbate biosynthesis via UDP-alpha-D-glucuronate pathway; L-ascorbate from UDP-alpha-D-glucuronate: step 4/4. Functionally, oxidizes L-gulono-1,4-lactone to hydrogen peroxide and L-xylo-hexulonolactone which spontaneously isomerizes to L-ascorbate. The protein is L-gulonolactone oxidase (GULO) of Bos taurus (Bovine).